A 264-amino-acid chain; its full sequence is 3-methyl-2-oxobutanoate hydroxymethyltransferase (264 aa).

Mg(2+)-binding residues include Asp-45 and Asp-84. 3-methyl-2-oxobutanoate contacts are provided by residues Asp-45–Ser-46, Asp-84, and Lys-112. Residue Glu-114 coordinates Mg(2+). Glu-181 functions as the Proton acceptor in the catalytic mechanism.

It belongs to the PanB family. In terms of assembly, homodecamer; pentamer of dimers. It depends on Mg(2+) as a cofactor.

It is found in the cytoplasm. The catalysed reaction is 3-methyl-2-oxobutanoate + (6R)-5,10-methylene-5,6,7,8-tetrahydrofolate + H2O = 2-dehydropantoate + (6S)-5,6,7,8-tetrahydrofolate. It participates in cofactor biosynthesis; (R)-pantothenate biosynthesis; (R)-pantoate from 3-methyl-2-oxobutanoate: step 1/2. Its function is as follows. Catalyzes the reversible reaction in which hydroxymethyl group from 5,10-methylenetetrahydrofolate is transferred onto alpha-ketoisovalerate to form ketopantoate. The sequence is that of 3-methyl-2-oxobutanoate hydroxymethyltransferase from Shewanella piezotolerans (strain WP3 / JCM 13877).